Reading from the N-terminus, the 195-residue chain is Protein aq_1444 (195 aa).

Positions 1–191 (MDIRELVHLG…EKEPFGEVER (191 aa)) constitute an AMMECR1 domain.

The chain is Protein aq_1444 from Aquifex aeolicus (strain VF5).